The sequence spans 385 residues: Mannitol-1-phosphate 5-dehydrogenase (385 aa).

Residue 4 to 15 (AVHFGAGNIGRG) coordinates NAD(+).

It belongs to the mannitol dehydrogenase family.

It catalyses the reaction D-mannitol 1-phosphate + NAD(+) = beta-D-fructose 6-phosphate + NADH + H(+). The protein is Mannitol-1-phosphate 5-dehydrogenase of Lactococcus lactis subsp. lactis (strain IL1403) (Streptococcus lactis).